We begin with the raw amino-acid sequence, 160 residues long: MKKIILTLSLGLLTACSAQIQKAEQNDVKLAPPTDVRSGYIRLVKNVNYYIDSESIWVDNQEPQIVHFDAVVNLDRGLYVYPEPKRYARSVRQYKILNCANYHLTQIRTDFYDEFWGQGLRAAPKKQKKHTLSLTPDTTLYNAAQIICANYGKAFSVDKK.

Positions 1–15 (MKKIILTLSLGLLTA) are cleaved as a signal peptide. A lipid anchor (N-palmitoyl cysteine) is attached at cysteine 16. Cysteine 16 carries S-diacylglycerol cysteine lipidation.

Its subcellular location is the cell outer membrane. The protein localises to the cell surface. Acts as a multifunctional adhesin involved in direct interactions with host epithelial cells and host proteins. The polypeptide is Surface-adhesin protein E (pe) (Haemophilus influenzae (strain ATCC 51907 / DSM 11121 / KW20 / Rd)).